The sequence spans 407 residues: Lysine racemase (407 aa).

A signal peptide spans 1–18 (MSLGIRYLALLPLFVITA). Cys19 is lipidated: N-palmitoyl cysteine. Cys19 carries S-diacylglycerol cysteine lipidation. Cys70 and Cys96 are disulfide-bonded. Catalysis depends on Lys74, which acts as the Proton acceptor. Lys74 is modified (N6-(pyridoxal phosphate)lysine). Arg173 serves as a coordination point for substrate. Tyr299 (proton acceptor) is an active-site residue. Residue Met347 coordinates substrate.

The protein belongs to the alanine racemase family. Bsr subfamily. As to quaternary structure, forms a head-to-tail homodimer in the structure. Pyridoxal 5'-phosphate is required as a cofactor.

Its subcellular location is the cell membrane. The protein resides in the periplasm. It carries out the reaction L-lysine = D-lysine. It catalyses the reaction L-arginine = D-arginine. With respect to regulation, the racemization activity of Lyr is completely inhibited by hydroxylamine. In terms of biological role, amino-acid racemase that catalyzes the interconversion of L-lysine and D-lysine. To a lesser extent, is also able to interconvert arginine enantiomers. Cannot use methionine, asparagine, alanine, leucine, glutamine, phenylalanine and histidine as substrates. In Proteus mirabilis, this protein is Lysine racemase.